Consider the following 456-residue polypeptide: Dual-specificity RNA methyltransferase RlmN (456 aa).

The segment at M1 to V21 is disordered. E175 (proton acceptor) is an active-site residue. The 234-residue stretch at D183–R416 folds into the Radical SAM core domain. C190 and C427 are oxidised to a cystine. Residues C197, C201, and C204 each contribute to the [4Fe-4S] cluster site. Residues G253–E254, S285, S307–H309, and N384 contribute to the S-adenosyl-L-methionine site. C427 acts as the S-methylcysteine intermediate in catalysis.

Belongs to the radical SAM superfamily. RlmN family. The cofactor is [4Fe-4S] cluster.

It is found in the cytoplasm. The enzyme catalyses adenosine(2503) in 23S rRNA + 2 reduced [2Fe-2S]-[ferredoxin] + 2 S-adenosyl-L-methionine = 2-methyladenosine(2503) in 23S rRNA + 5'-deoxyadenosine + L-methionine + 2 oxidized [2Fe-2S]-[ferredoxin] + S-adenosyl-L-homocysteine. The catalysed reaction is adenosine(37) in tRNA + 2 reduced [2Fe-2S]-[ferredoxin] + 2 S-adenosyl-L-methionine = 2-methyladenosine(37) in tRNA + 5'-deoxyadenosine + L-methionine + 2 oxidized [2Fe-2S]-[ferredoxin] + S-adenosyl-L-homocysteine. In terms of biological role, specifically methylates position 2 of adenine 2503 in 23S rRNA and position 2 of adenine 37 in tRNAs. m2A2503 modification seems to play a crucial role in the proofreading step occurring at the peptidyl transferase center and thus would serve to optimize ribosomal fidelity. This chain is Dual-specificity RNA methyltransferase RlmN, found in Paramagnetospirillum magneticum (strain ATCC 700264 / AMB-1) (Magnetospirillum magneticum).